The chain runs to 213 residues: MHKYSKEIPFPETKFFTSIAKLDEKEDLDSVQSIAFMGRSNSGKSSLLNALSNHRGLAKVSRTPGKTKLINIFRTKVGFNLVDLPGFGYSKASHKEHKDMMNLLEGFLNSWKQLKILFILCDSQRDFPEEELSTIEVAMEKKIKPVVIRTKIDKLNQSGQHKVRTEMEAAMNEIGIPFRVFYISASTGRGIGELREFILETLGIQTKVSNVEP.

The region spanning 30-204 (SVQSIAFMGR…REFILETLGI (175 aa)) is the EngB-type G domain. GTP is bound by residues 38–45 (GRSNSGKS), 65–69 (GKTKL), 83–86 (DLPG), 150–153 (TKID), and 183–185 (ISA). Mg(2+) is bound by residues serine 45 and threonine 67.

This sequence belongs to the TRAFAC class TrmE-Era-EngA-EngB-Septin-like GTPase superfamily. EngB GTPase family. The cofactor is Mg(2+).

Functionally, necessary for normal cell division and for the maintenance of normal septation. The sequence is that of Probable GTP-binding protein EngB from Leptospira biflexa serovar Patoc (strain Patoc 1 / Ames).